The sequence spans 725 residues: Eukaryotic translation initiation factor 3 subunit B (725 aa).

The 85-residue stretch at 46–130 folds into the RRM domain; that stretch reads NCVFIAGIPV…HTFTARSFKD (85 aa). WD repeat units follow at residues 202 to 240, 242 to 280, 354 to 395, 462 to 504, 510 to 552, and 554 to 594; these read RANWTETVFTWSPHGSYLSTIHKQGIILWGGKDYARAHR, AHTNVQYIDFSPCETYLVTYAAPEESNSWGDCEKDSLRI, VNIE…SMQR, PLSE…HAPK, DAGV…AKRT, and VIEH…FTFQ.

Belongs to the eIF-3 subunit B family. As to quaternary structure, component of the eukaryotic translation initiation factor 3 (eIF-3) complex.

The protein localises to the cytoplasm. Functionally, RNA-binding component of the eukaryotic translation initiation factor 3 (eIF-3) complex, which is involved in protein synthesis of a specialized repertoire of mRNAs and, together with other initiation factors, stimulates binding of mRNA and methionyl-tRNAi to the 40S ribosome. The eIF-3 complex specifically targets and initiates translation of a subset of mRNAs involved in cell proliferation. The chain is Eukaryotic translation initiation factor 3 subunit B from Caenorhabditis elegans.